Here is a 423-residue protein sequence, read N- to C-terminus: Glycine amidinotransferase, mitochondrial (423 aa).

A mitochondrion-targeting transit peptide spans 1-48 (MLRVRCLRGGSRGAEAVHYIGSRLGRTLTGWVQRTFQSTQAATASSRN). Low complexity predominate over residues 39 to 51 (TQAATASSRNSSA). Positions 39 to 65 (TQAATASSRNSSAADDKATEPLPKDCP) are disordered. 2 positions are modified to phosphoserine: Ser-46 and Ser-49. Basic and acidic residues predominate over residues 52 to 61 (ADDKATEPLP). Asp-170 serves as a coordination point for arginine. Catalysis depends on residues Asp-254 and His-303. Residues Asp-305, Arg-322, Ser-354, and Ser-355 each contribute to the arginine site. N6-acetyllysine is present on Lys-385. The Amidino-cysteine intermediate role is filled by Cys-407.

This sequence belongs to the amidinotransferase family. Homodimer.

It is found in the mitochondrion inner membrane. The enzyme catalyses L-arginine + glycine = guanidinoacetate + L-ornithine. It carries out the reaction 4-aminobutanoate + L-arginine = 4-guanidinobutanoate + L-ornithine. The catalysed reaction is beta-alanine + L-arginine = 3-guanidinopropanoate + L-ornithine. It catalyses the reaction taurine + L-arginine = taurocyamine + L-ornithine. The protein operates within amine and polyamine biosynthesis; creatine biosynthesis; creatine from L-arginine and glycine: step 1/2. Functionally, transamidinase that catalyzes the transfer of the amidino group of L-arginine onto the amino moiety of acceptor metabolites such as glycine, beta-alanine, gamma-aminobutyric acid (GABA) and taurine yielding the corresponding guanidine derivatives. Catalyzes the rate-limiting step of creatine biosynthesis, namely the transfer of the amidino group from L-arginine to glycine to generate guanidinoacetate, which is then methylated by GAMT to form creatine. Provides creatine as a source for ATP generation in tissues with high energy demands, in particular skeletal muscle, heart and brain. This chain is Glycine amidinotransferase, mitochondrial (GATM), found in Pongo abelii (Sumatran orangutan).